The chain runs to 122 residues: Large ribosomal subunit protein uL14 (122 aa).

This sequence belongs to the universal ribosomal protein uL14 family. In terms of assembly, part of the 50S ribosomal subunit. Forms a cluster with proteins L3 and L19. In the 70S ribosome, L14 and L19 interact and together make contacts with the 16S rRNA in bridges B5 and B8.

In terms of biological role, binds to 23S rRNA. Forms part of two intersubunit bridges in the 70S ribosome. The polypeptide is Large ribosomal subunit protein uL14 (Agathobacter rectalis (strain ATCC 33656 / DSM 3377 / JCM 17463 / KCTC 5835 / VPI 0990) (Eubacterium rectale)).